A 2060-amino-acid polypeptide reads, in one-letter code: Unconventional myosin-X (2060 aa).

An N-acetylmethionine modification is found at Met-1. Residues 63–739 enclose the Myosin motor domain; sequence EGVDDMASLT…LEQKLEKRRE (677 aa). ATP is bound by residues Asn-104, Tyr-113, 160-165, and Asn-215; that span reads GAGKTE. The segment at 619–641 is actin-binding; sequence LHSLMATLSSSNPFFVRCIKPNT. 3 IQ domains span residues 742 to 771, 765 to 794, and 788 to 817; these read IDRAAMVIRAHILGYLARKQYRKVLCGVVT, VLCGVVTIQKNYRAFLARKRFLHLKKAAIV, and LKKAAIVFQKQLRGRLARKVYRQLLAEKRE. Residues 814 to 882 form an SAH region; the sequence is EKRELEERKR…LTRELEKQRE (69 aa). Residues 883–933 are a coiled coil; it reads NKQVEEILRLEKEIEDLQRMKEQQELSLTEASLQKLQQLRDEELRRLEDEA. Phosphoserine occurs at positions 961, 964, and 967. Disordered stretches follow at residues 971 to 1039 and 1064 to 1088; these read SELA…PYMN and SLHNSSSGESTYCMPQNNGDLPSPD. Residues 991–1005 are compositionally biased toward acidic residues; that stretch reads PEEEVDEGFEADDDA. Residues 1064–1083 are compositionally biased toward polar residues; that stretch reads SLHNSSSGESTYCMPQNNGD. Position 1160 is a phosphothreonine (Thr-1160). 2 PH domains span residues 1214 to 1312 and 1394 to 1499; these read EALK…QVHS and EFIV…NVTD. The MyTH4 domain occupies 1549–1697; the sequence is LPYGDINLNL…PSRDEIEALI (149 aa). Positions 1702–2046 constitute an FERM domain; that stretch reads MTSTVYCHGG…AYISMIVKKR (345 aa).

The protein belongs to the TRAFAC class myosin-kinesin ATPase superfamily. Myosin family. In terms of assembly, monomer, when in an inactive conformation in the cytosol. Homodimer in its active, membrane-bound conformation; antiparallel coiled coil-mediated dimer formation. Interacts with ECPAS. Interacts with DCC and ITGB5; the presence of DCC inhibits ITGB5 binding. Interacts with tubulin; ITGB5 or DCC binding inhibits tubulin binding. Interacts strongly with CALM3 and weakly with CALM, the CALM3 interaction is essential for function in filopodial extension and motility. Interacts with ITGB1, ITGB3 and ITGB5. Interacts with NEO1. Interacts with VASP.

It is found in the cytoplasm. The protein resides in the cytosol. The protein localises to the cell projection. Its subcellular location is the lamellipodium. It localises to the ruffle. It is found in the cytoskeleton. The protein resides in the filopodium tip. The protein localises to the cell cortex. Its subcellular location is the filopodium membrane. It localises to the cell membrane. Myosins are actin-based motor molecules with ATPase activity. Unconventional myosins serve in intracellular movements. MYO10 binds to actin filaments and actin bundles and functions as a plus end-directed motor. Moves with higher velocity and takes larger steps on actin bundles than on single actin filaments. The tail domain binds to membranous compartments containing phosphatidylinositol 3,4,5-trisphosphate or integrins, and mediates cargo transport along actin filaments. Regulates cell shape, cell spreading and cell adhesion. Stimulates the formation and elongation of filopodia. In hippocampal neurons it induces the formation of dendritic filopodia by trafficking the actin-remodeling protein VASP to the tips of filopodia, where it promotes actin elongation. Plays a role in formation of the podosome belt in osteoclasts. The protein is Unconventional myosin-X (Myo10) of Rattus norvegicus (Rat).